A 267-amino-acid polypeptide reads, in one-letter code: Probable proteasome subunit beta type-2 (267 aa).

The propeptide at 1-35 is removed in mature form; it reads MMGINERKGFDFEYYQRNLLLQEKGFPTPKATSTG. Threonine 36 acts as the Nucleophile in catalysis.

Belongs to the peptidase T1B family. The 26S proteasome consists of a 20S proteasome core and two 19S regulatory subunits. The 20S proteasome core is composed of 28 subunits that are arranged in four stacked rings, resulting in a barrel-shaped structure. The two end rings are each formed by seven alpha subunits, and the two central rings are each formed by seven beta subunits. The catalytic chamber with the active sites is on the inside of the barrel.

Its subcellular location is the cytoplasm. The protein resides in the nucleus. The catalysed reaction is Cleavage of peptide bonds with very broad specificity.. The proteasome is a multicatalytic proteinase complex which is characterized by its ability to cleave peptides with Arg, Phe, Tyr, Leu, and Glu adjacent to the leaving group at neutral or slightly basic pH. The proteasome has an ATP-dependent proteolytic activity (Potential). This is Probable proteasome subunit beta type-2 (pup1) from Schizosaccharomyces pombe (strain 972 / ATCC 24843) (Fission yeast).